Here is a 369-residue protein sequence, read N- to C-terminus: Serpentine receptor class epsilon-45 (369 aa).

The next 8 helical transmembrane spans lie at 1-21, 39-59, 67-87, 127-147, 169-191, 195-217, 258-278, and 291-311; these read MIFL…IFIL, FVLT…AIHI, TVLL…NILI, FFLG…TLLV, GLFF…LFFF, HFAV…FTYV, VIHA…FMYL, and IFES…LGSV.

It belongs to the nematode receptor-like protein sre family.

The protein localises to the membrane. In Caenorhabditis elegans, this protein is Serpentine receptor class epsilon-45 (sre-45).